A 462-amino-acid polypeptide reads, in one-letter code: Notoamide biosynthesis cluster protein O' (462 aa).

3 helical membrane passes run 16–36 (IFNV…WAAM), 55–75 (AVIF…IAKI), and 79–99 (WAFA…YCNV). Asn102 carries N-linked (GlcNAc...) asparagine glycosylation. Helical transmembrane passes span 104–124 (SWYI…FWLT), 143–163 (AYWL…TLGV), 173–193 (ISVQ…FVAA), and 233–253 (ILLL…FSTY). N-linked (GlcNAc...) asparagine glycosylation occurs at Asn254. Helical transmembrane passes span 265–285 (LSSL…GFFL), 297–317 (MAAF…AMVV), 343–363 (VYIL…WLIG), and 404–424 (AVAV…FVIY). A disordered region spans residues 443 to 462 (LQTSGEGSHDIMDANGKSDD). Over residues 449–462 (GSHDIMDANGKSDD) the composition is skewed to basic and acidic residues.

The protein belongs to the unc-93 family.

It is found in the membrane. Functionally, part of the gene cluster that mediates the biosynthesis of notoamide, a fungal indole alkaloid that belongs to a family of natural products containing a characteristic bicyclo[2.2.2]diazaoctane core. The first step of notoamide biosynthesis involves coupling of L-proline and L-tryptophan by the bimodular NRPS notE', to produce cyclo-L-tryptophan-L-proline called brevianamide F. The reverse prenyltransferase notF' then acts as a deoxybrevianamide E synthase and converts brevianamide F to deoxybrevianamide E via reverse prenylation at C-2 of the indole ring leading to the bicyclo[2.2.2]diazaoctane core. Deoxybrevianamide E is further hydroxylated at C-6 of the indole ring, likely catalyzed by the cytochrome P450 monooxygenase notG', to yield 6-hydroxy-deoxybrevianamide E. 6-hydroxy-deoxybrevianamide E is a specific substrate of the prenyltransferase notC' for normal prenylation at C-7 to produce 6-hydroxy-7-prenyl-deoxybrevianamide, also called notoamide S. As the proposed pivotal branching point in notoamide biosynthesis, notoamide S can be diverted to notoamide E through an oxidative pyran ring closure putatively catalyzed by either notH' cytochrome P450 monooxygenase or the notD' FAD-linked oxidoreductase. This step would be followed by an indole 2,3-epoxidation-initiated pinacol-like rearrangement catalyzed by the notB' FAD-dependent monooxygenase leading to the formation of notoamide C and notoamide D. On the other hand notoamide S is converted to notoamide T by notH' (or notD'), a bifunctional oxidase that also functions as the intramolecular Diels-Alderase responsible for generation of (-)-notoamide T. To generate antipodal (+)-notoaminide T, notH (or notD) in Aspergillus strain MF297-2 is expected to catalyze a Diels-Alder reaction leading to the opposite stereochemistry. The remaining oxidoreductase notD' (or notH') likely catalyzes the oxidative pyran ring formation to yield (-)-stephacidin A. The FAD-dependent monooxygenase notI' is highly similar to notB' and is predicted to catalyze a similar conversion from (-)-stephacidin A to (+)-notoamide B via the 2,3-epoxidation of (-)-stephacidin A followed by a pinacol-type rearrangement. Finally, it remains unclear which enzyme could be responsible for the final hydroxylation steps leading to notoamide A and sclerotiamide. The function of notO' in the notoamide biosynthesis has not been determined yet. The sequence is that of Notoamide biosynthesis cluster protein O' from Aspergillus versicolor.